The sequence spans 207 residues: uncharacterized protein (207 aa).

The YrdC-like domain maps to 14–201 (ARLINQAVEI…SPVILREGSG (188 aa)).

The protein belongs to the SUA5 family.

This is an uncharacterized protein from Haemophilus influenzae (strain ATCC 51907 / DSM 11121 / KW20 / Rd).